A 417-amino-acid chain; its full sequence is WD repeat and FYVE domain-containing protein 2 (417 aa).

WD repeat units lie at residues 29–68 (GHVA…QFWP), 119–157 (CHAG…NKVG), 202–241 (AHTN…GEAY), and 245–284 (GHNG…VETP). The segment at 286 to 357 (WKTSDCCQKC…ICNDCAGRMK (72 aa)) adopts an FYVE-type zinc-finger fold. Residues Cys-292, Cys-295, Cys-319, Cys-322, Cys-327, Cys-330, Cys-349, and Cys-352 each coordinate Zn(2+). One copy of the WD 5 repeat lies at 373–412 (EIRTGITAMHLQETLGLLVTSGQNRVVMIWDVRSVCSAPS).

Its function is as follows. Plays a role in coelomocyte endocytosis. The protein is WD repeat and FYVE domain-containing protein 2 of Caenorhabditis briggsae.